We begin with the raw amino-acid sequence, 349 residues long: MSATGLGPVRCAFVLLLALCSRPASSQDCSAPCQCPAGPAPRCPAGVSLVLDGCGCCRVCAKQLSELCTERDPCDPHKGLFCDFGSPANRKIGVCTAKDGAPCVFGGTVYQSGESFQSSCKYQCTCLDGSVGCVPLCSVDVRLPSPDCPFPRRVKLPGKCCEEWVCDEPKEHTVVGPALAAYRPEDTFGPDPTMIRANCLVQTTEWSACSKTCGMGISTRVTNDNAFCRLEKQSRLCMVRPCEADLEENIKKGKKCIRTPKISKPIKFELSGCTSMKTYRAKFCGVCTDGRCCTPHRTTTLPVEFKCPDGEVMKKSMMFIKTCACHYNCPGDNDIFESLYYRKMYGDMA.

The N-terminal stretch at 1-26 is a signal peptide; the sequence is MSATGLGPVRCAFVLLLALCSRPASS. The IGFBP N-terminal domain maps to 27–98; the sequence is QDCSAPCQCP…NRKIGVCTAK (72 aa). 6 disulfides stabilise this stretch: C29/C54, C33/C56, C35/C57, C43/C60, C68/C82, and C74/C95. Positions 101–167 constitute a VWFC domain; it reads APCVFGGTVY…GKCCEEWVCD (67 aa). In terms of domain architecture, TSP type-1 spans 198 to 243; sequence NCLVQTTEWSACSKTCGMGISTRVTNDNAFCRLEKQSRLCMVRPCE. Residues 247–349 are heparin-binding; sequence EENIKKGKKC…YYRKMYGDMA (103 aa). 5 cysteine pairs are disulfide-bonded: C256–C293, C273–C307, C284–C323, C287–C325, and C292–C329. Positions 256-330 constitute a CTCK domain; that stretch reads CIRTPKISKP…KTCACHYNCP (75 aa).

The protein belongs to the CCN family. As to quaternary structure, monomer. Interacts with TSKU.

The protein resides in the secreted. The protein localises to the extracellular space. Its subcellular location is the extracellular matrix. Its function is as follows. Major connective tissue mitoattractant secreted by vascular endothelial cells. Promotes proliferation and differentiation of chondrocytes. Is involved in the stimulation of osteoblast differentiation and has a critical role in osteogenesis. Mediates heparin- and divalent cation-dependent cell adhesion in many cell types including fibroblasts, myofibroblasts, endothelial and epithelial cells. Enhances fibroblast growth factor-induced DNA synthesis. This is CCN family member 2 (CCN2) from Bos taurus (Bovine).